Consider the following 294-residue polypeptide: Bifunctional protein FolD (294 aa).

NADP(+)-binding positions include 175–177 and Ile-241; that span reads GAS.

It belongs to the tetrahydrofolate dehydrogenase/cyclohydrolase family. Homodimer.

It carries out the reaction (6R)-5,10-methylene-5,6,7,8-tetrahydrofolate + NADP(+) = (6R)-5,10-methenyltetrahydrofolate + NADPH. The catalysed reaction is (6R)-5,10-methenyltetrahydrofolate + H2O = (6R)-10-formyltetrahydrofolate + H(+). It participates in one-carbon metabolism; tetrahydrofolate interconversion. In terms of biological role, catalyzes the oxidation of 5,10-methylenetetrahydrofolate to 5,10-methenyltetrahydrofolate and then the hydrolysis of 5,10-methenyltetrahydrofolate to 10-formyltetrahydrofolate. In Hahella chejuensis (strain KCTC 2396), this protein is Bifunctional protein FolD.